The chain runs to 476 residues: MSYSQTRTQSKAGYDAGVKDYKLTYYTPDYTPKDTDILAAFRMTPQPGVPPEEAGAAVAAESSTGTWTTVWTDLLTDLDRYKGRCYDIEAVANEDNQYIAYIAYPLDLFEEGSVVNLLTSLVGNVFGFKALRALRLEDIRIPVAYMKTFQGPPHGITVERDKINKYGRPLLGCTIKPKLGLSAKNYGRAVYECLRGGLDFTKDDENINSQPFMRWRDRFLFVAEAIHKAQAETGEIKGHYLNVTAATCEEMLKRAEFAKELEMPIIMHDFITGGFTANTTLSHWCRDNGVLLHIHRAMHAVIDRQKNHGMHFRVLSKCLRMSGGDHIHTGTVVGKLEGEKGITMGFVDLLRENYVEKDLSRGIYFTQDWASMGGVMAVASGGIHVWHMPALVEIFGDDSVLQFGGGTLGHPWGCAPGATANRVALEACVQARNEGRDMAREGGDILREAAKWSPELAVALEVWKEIKFEFEAMDTV.

Positions 124 and 174 each coordinate substrate. Lys-176 acts as the Proton acceptor in catalysis. Lys-178 is a substrate binding site. Mg(2+)-binding residues include Lys-202, Asp-204, and Glu-205. Residue Lys-202 is modified to N6-carboxylysine. His-295 serves as the catalytic Proton acceptor. Substrate is bound by residues Arg-296, His-328, and Ser-380.

Belongs to the RuBisCO large chain family. Type I subfamily. In terms of assembly, heterohexadecamer of 8 large chains and 8 small chains; disulfide-linked. The disulfide link is formed within the large subunit homodimers. Mg(2+) serves as cofactor. Post-translationally, the disulfide bond which can form in the large chain dimeric partners within the hexadecamer appears to be associated with oxidative stress and protein turnover.

The protein localises to the carboxysome. The enzyme catalyses 2 (2R)-3-phosphoglycerate + 2 H(+) = D-ribulose 1,5-bisphosphate + CO2 + H2O. The catalysed reaction is D-ribulose 1,5-bisphosphate + O2 = 2-phosphoglycolate + (2R)-3-phosphoglycerate + 2 H(+). Functionally, ruBisCO catalyzes two reactions: the carboxylation of D-ribulose 1,5-bisphosphate, the primary event in carbon dioxide fixation, as well as the oxidative fragmentation of the pentose substrate in the photorespiration process. Both reactions occur simultaneously and in competition at the same active site. The chain is Ribulose bisphosphate carboxylase large chain from Acaryochloris marina (strain MBIC 11017).